Reading from the N-terminus, the 200-residue chain is Holliday junction branch migration complex subunit RuvA (200 aa).

The segment at 1–64 is domain I; it reads MIAHLTGLVG…EDAFLLYGFA (64 aa). The interval 65–143 is domain II; the sequence is EAAERDWFRL…RMPAGPGVTI (79 aa). The tract at residues 144–147 is flexible linker; that stretch reads AAPP. The interval 148–200 is domain III; that stretch reads ASGGVEADALLALAGLGFRRAEAQPVVGRILARLDGKADLDVVIRESLRELAR.

The protein belongs to the RuvA family. Homotetramer. Forms an RuvA(8)-RuvB(12)-Holliday junction (HJ) complex. HJ DNA is sandwiched between 2 RuvA tetramers; dsDNA enters through RuvA and exits via RuvB. An RuvB hexamer assembles on each DNA strand where it exits the tetramer. Each RuvB hexamer is contacted by two RuvA subunits (via domain III) on 2 adjacent RuvB subunits; this complex drives branch migration. In the full resolvosome a probable DNA-RuvA(4)-RuvB(12)-RuvC(2) complex forms which resolves the HJ.

The protein resides in the cytoplasm. The RuvA-RuvB-RuvC complex processes Holliday junction (HJ) DNA during genetic recombination and DNA repair, while the RuvA-RuvB complex plays an important role in the rescue of blocked DNA replication forks via replication fork reversal (RFR). RuvA specifically binds to HJ cruciform DNA, conferring on it an open structure. The RuvB hexamer acts as an ATP-dependent pump, pulling dsDNA into and through the RuvAB complex. HJ branch migration allows RuvC to scan DNA until it finds its consensus sequence, where it cleaves and resolves the cruciform DNA. In Gluconacetobacter diazotrophicus (strain ATCC 49037 / DSM 5601 / CCUG 37298 / CIP 103539 / LMG 7603 / PAl5), this protein is Holliday junction branch migration complex subunit RuvA.